Reading from the N-terminus, the 209-residue chain is Protein phosphotransferase ChpT (209 aa).

H22 bears the Phosphohistidine mark.

This sequence belongs to the ChpT phosphotransferase family. As to quaternary structure, homodimer. Forms an asymmetric heterotetramer with CtrA (2:2). There are at least two modes of interaction between ChpT and CtrA, only one of which is competent to catalyze His-Asp phosphoryl transfer. Post-translationally, is phosphorylated by CckA-P on His-22.

The protein localises to the cytoplasm. Functionally, component of a regulatory phosphorelay system that controls B.abortus cell growth, division, and intracellular survival inside mammalian host cells. This signaling pathway is composed of CckA, ChpT, CtrA and CpdR. ChpT efficiently and specifically shuttles phosphoryl groups from the CckA kinase to the receiver domains of both CtrA and CpdR. Does not bind ATP. Overexpression of chpT results in a defect in cell morphology, DNA content, and intracellular survival in human macrophages. The chain is Protein phosphotransferase ChpT from Brucella abortus (strain 2308).